The sequence spans 127 residues: Photosystem II reaction center Psb28 protein (127 aa).

The disordered stretch occupies residues 107–127 (GLGYSQNQNSDQTDGDANAEA). Over residues 109 to 118 (GYSQNQNSDQ) the composition is skewed to polar residues.

The protein belongs to the Psb28 family. In terms of assembly, part of the photosystem II complex.

Its subcellular location is the cellular thylakoid membrane. The chain is Photosystem II reaction center Psb28 protein from Parasynechococcus marenigrum (strain WH8102).